Here is a 319-residue protein sequence, read N- to C-terminus: Probable carboxylesterase 5 (319 aa).

An N-acetylmethionine modification is found at Met1. Positions 79–81 match the Involved in the stabilization of the negatively charged intermediate by the formation of the oxyanion hole motif; the sequence is HGG. Active-site residues include Ser163, Asp262, and His294.

Belongs to the 'GDXG' lipolytic enzyme family. Expressed in roots, leaves, stems, flowers and siliques.

The enzyme catalyses a carboxylic ester + H2O = an alcohol + a carboxylate + H(+). Functionally, carboxylesterase acting on esters with varying acyl chain length. The chain is Probable carboxylesterase 5 (CXE5) from Arabidopsis thaliana (Mouse-ear cress).